Here is a 248-residue protein sequence, read N- to C-terminus: Pyridoxine 5'-phosphate synthase (248 aa).

Asn-8 and Arg-19 together coordinate 3-amino-2-oxopropyl phosphate. His-44 functions as the Proton acceptor in the catalytic mechanism. Positions 46 and 51 each coordinate 1-deoxy-D-xylulose 5-phosphate. Residue Glu-76 is the Proton acceptor of the active site. 1-deoxy-D-xylulose 5-phosphate is bound at residue Thr-106. His-200 acts as the Proton donor in catalysis. 3-amino-2-oxopropyl phosphate is bound by residues Asp-201 and 223-224; that span reads GH.

It belongs to the PNP synthase family. As to quaternary structure, homooctamer; tetramer of dimers.

The protein localises to the cytoplasm. It catalyses the reaction 3-amino-2-oxopropyl phosphate + 1-deoxy-D-xylulose 5-phosphate = pyridoxine 5'-phosphate + phosphate + 2 H2O + H(+). The protein operates within cofactor biosynthesis; pyridoxine 5'-phosphate biosynthesis; pyridoxine 5'-phosphate from D-erythrose 4-phosphate: step 5/5. Catalyzes the complicated ring closure reaction between the two acyclic compounds 1-deoxy-D-xylulose-5-phosphate (DXP) and 3-amino-2-oxopropyl phosphate (1-amino-acetone-3-phosphate or AAP) to form pyridoxine 5'-phosphate (PNP) and inorganic phosphate. The chain is Pyridoxine 5'-phosphate synthase from Chelativorans sp. (strain BNC1).